The sequence spans 180 residues: Shikimate kinase (180 aa).

14-19 (GAGKTC) contacts ATP. Position 18 (T18) interacts with Mg(2+). D36, R60, and G82 together coordinate substrate. R120 serves as a coordination point for ATP. R139 is a substrate binding site.

This sequence belongs to the shikimate kinase family. In terms of assembly, monomer. It depends on Mg(2+) as a cofactor.

The protein resides in the cytoplasm. The catalysed reaction is shikimate + ATP = 3-phosphoshikimate + ADP + H(+). It functions in the pathway metabolic intermediate biosynthesis; chorismate biosynthesis; chorismate from D-erythrose 4-phosphate and phosphoenolpyruvate: step 5/7. Functionally, catalyzes the specific phosphorylation of the 3-hydroxyl group of shikimic acid using ATP as a cosubstrate. The protein is Shikimate kinase of Stenotrophomonas maltophilia (strain K279a).